Consider the following 601-residue polypeptide: Ubiquilin-4 (601 aa).

One can recognise a Ubiquitin-like domain in the interval 13–87 (IRVTVKTPKD…VHLVIKTPQK (75 aa)). Glycyl lysine isopeptide (Lys-Gly) (interchain with G-Cter in SUMO2) cross-links involve residues Lys-23 and Lys-62. Positions 87–155 (KAQDPAAATA…GAGEGSPSAT (69 aa)) are disordered. Over residues 88–138 (AQDPAAATASSPSTPDPASAPSTTPASPATPAQPSTSGSASSDAGSGSRRS) the composition is skewed to low complexity. Ser-98 and Ser-144 each carry phosphoserine. Positions 139–149 (SGGGPSPGAGE) are enriched in gly residues. 2 STI1 domains span residues 192 to 229 (NPEMLSQIMENPLVQDMMSNPDLMRHMIMANPQMQQLM) and 230 to 261 (ERNPEISHMLNNPELMRQTMELARNPAMMQEM). At Thr-287 the chain carries Phosphothreonine. Residues 301-366 (FGNNPFSSLA…QVHPTVSNPF (66 aa)) are disordered. Residues 307-318 (SSLAGNSDSSSS) show a composition bias toward low complexity. Residue Ser-318 is modified to Phosphoserine; by ATM. A compositionally biased stretch (pro residues) spans 329 to 340 (LPNPWSPSPPTS). The segment covering 344–354 (GSGGEGTGGSG) has biased composition (gly residues). Residues 357–366 (QVHPTVSNPF) are compositionally biased toward polar residues. STI1 domains lie at 393–440 (NPQL…QEQL) and 444–476 (LPVFLQQMQNPESLSILTNPRAMQALLQIQQGL). The segment at 490–533 (LGSFGISRTPAPSAGSNAGSTPEAPTSSPATPATSSPTGASSAQ) is disordered. Residues 507-533 (AGSTPEAPTSSPATPATSSPTGASSAQ) show a composition bias toward low complexity. The region spanning 553–598 (QTPEVRFQQQLEQLNSMGFINREANLQALIATGGDINAAIERLLGS) is the UBA domain.

In terms of assembly, homooligomer. Binds signal sequences of proteins that are targeted to the endoplasmic reticulum. Interacts (via UBA domain) with GJA1 (not ubiquitinated) and with ubiquitin; both compete for the same binding site. Interacts (via UBA domain) with ubiquitin and with polyubiquitin chains. Interacts (via ubiquitin-like domain) with PSMD2 and PSMD4, regulatory subunits of the 26S proteasome. Interacts with ATXN1/SCA1; interaction with ATXN1 inhibits polyubiquitination of UBQLN4 and interferes with PSMD4 binding. Interacts with HERPUD1. Interacts (via ubiquitin-like domain) with UBQLN1 (via UBA domain). Interacts with UBQLN2. Interacts (via STI1 1 and 2 domains) with MAP1LC3A/B/C. Interacts with BAG6. Interacts with MRE11 (when ubiquitinated); interaction with ubiquitinated MRE11 leads to MRE11 removal from chromatin. Interacts with DESI1/POST; leading to nuclear export. Interacts with BCL2A1 and BCL2L10. As to quaternary structure, (Microbial infection) Interacts with Mumps virus protein SH. In terms of processing, phosphorylated by ATM at Ser-318 in response to DNA damage, leading to localization in the nucleus and recruitment to sites of DNA damage. Post-translationally, ubiquitinated; this does not lead to proteasomal degradation. May undergo both 'Lys-48'- and 'Lys-63'-linked polyubiquitination. In terms of tissue distribution, highly expressed in pancreas, kidney, skeletal muscle, heart and throughout the brain, and at lower levels in placenta, lung and liver.

Its subcellular location is the nucleus. The protein localises to the cytoplasm. It is found in the chromosome. The protein resides in the endoplasmic reticulum. It localises to the perinuclear region. Its subcellular location is the cytoplasmic vesicle. The protein localises to the autophagosome. Its function is as follows. Regulator of protein degradation that mediates the proteasomal targeting of misfolded, mislocalized or accumulated proteins. Acts by binding polyubiquitin chains of target proteins via its UBA domain and by interacting with subunits of the proteasome via its ubiquitin-like domain. Key regulator of DNA repair that represses homologous recombination repair: in response to DNA damage, recruited to sites of DNA damage following phosphorylation by ATM and acts by binding and removing ubiquitinated MRE11 from damaged chromatin, leading to MRE11 degradation by the proteasome. MRE11 degradation prevents homologous recombination repair, redirecting double-strand break repair toward non-homologous end joining (NHEJ). Specifically recognizes and binds mislocalized transmembrane-containing proteins and targets them to proteasomal degradation. Collaborates with DESI1/POST in the export of ubiquitinated proteins from the nucleus to the cytoplasm. Also plays a role in the regulation of the proteasomal degradation of non-ubiquitinated GJA1. Acts as an adapter protein that recruits UBQLN1 to the autophagy machinery. Mediates the association of UBQLN1 with autophagosomes and the autophagy-related protein LC3 (MAP1LC3A/B/C) and may assist in the maturation of autophagosomes to autolysosomes by mediating autophagosome-lysosome fusion. The protein is Ubiquilin-4 of Homo sapiens (Human).